The following is a 396-amino-acid chain: MAKAKFERNKPHVNVGTIGHVDHGKTTLTAAIATVAAKTFGGEAKDYAAIDSAPEEKARGITINTSHIEYDTADRHYAHVDCPGHADYVKNMITGAAQMDGAILVVSATDGPMPQTREHILLSRQVGVPYIMVFMNKCDMVDDEELLELVEMEVRELLSDYDFPGDDTPIIKGSALEALNGKDGKYGEPAVIELLNTLDTYIPEPERDIDKPFLMPIEDVFSISGRGTVVTGRVESGIVKVGDEIEIVGIRDTQKTTCTGVEMFRKLLDEGRAGENCGVLLRGTKREDVQRGQVLAKPGSITPHTKFDAEVYVLSKEEGGRHTPFLNGYRPQFYFRTTDVTGAISLQEGTEMVMPGDNVEMSVELIHPIAMDKGLRFAIREGGRTVGAGVVANVKD.

Positions 10–206 constitute a tr-type G domain; that stretch reads KPHVNVGTIG…TLDTYIPEPE (197 aa). Residues 19–26 form a G1 region; that stretch reads GHVDHGKT. 19 to 26 is a binding site for GTP; sequence GHVDHGKT. Threonine 26 lines the Mg(2+) pocket. A G2 region spans residues 60-64; that stretch reads GITIN. The G3 stretch occupies residues 81–84; sequence DCPG. GTP-binding positions include 81-85 and 136-139; these read DCPGH and NKCD. Residues 136–139 form a G4 region; the sequence is NKCD. Residues 174–176 are G5; that stretch reads SAL.

This sequence belongs to the TRAFAC class translation factor GTPase superfamily. Classic translation factor GTPase family. EF-Tu/EF-1A subfamily. As to quaternary structure, monomer.

The protein resides in the cytoplasm. The catalysed reaction is GTP + H2O = GDP + phosphate + H(+). In terms of biological role, GTP hydrolase that promotes the GTP-dependent binding of aminoacyl-tRNA to the A-site of ribosomes during protein biosynthesis. In Psychrobacter sp. (strain PRwf-1), this protein is Elongation factor Tu 2.